We begin with the raw amino-acid sequence, 1555 residues long: MEENKSVAEGKAATGSLKESEETSAQNGELGEPEVQQTLKRTNSTESGGTGQKPPEEAPRRRFQIPRKSRDKRALQVISSGSREFEEILKILHSSYLDANSKASFSYKCARLVHNEFLEKEFTEKRRQLKFDGRLDKELVESYVFLLVDQEQMHSITEKGLHVGHSRMTTLGKPSMGVYLSRYADLLQANPLETGTTGDIFIFKVIKGKMKFVFDHIRNNQMDSFSGNGGLDPVPKHECHVLKNMNAVTALLGYRAFERTQYYFYEYGFDEVLKRPRHVCPYAVMSFGYKDELATRQPPLPTSGPVSFPTERSFDRSSFTLWRGQLLNKGKLLCYASLKSTSGPFIPYRLPERLDLDIVIKIEVIKKSIPAVLFYKETHNKPNEAKHGGIYSRLYEVVEKTRTGSHLQGLLQKIERENLALVKPLDDRGFMFLYFPSPMTSAYASAKTRLLHALFIYHESRLTQPVANVPVPPSFVPESHEFMPEVLTFVPALHFALHKSQSDTSADFNDVVEKHSRIYLKRRAEKLNKFKEYVLKPYDSRLDYKKSLYVAPRIKGHIESALRSYLFGSEAYTIPVDKAKEMLKENQRFQQFSPVSDYEPVEDDHDSNKYNKKCPVSYVETNSEKSSESTDWDIDKINGLINLIQKKKQSKPETDEPSGVGLKRKLDRQSEKAWKHRKCEENVHHDNEPGESAQSLISSLGGQDTDLRQETESLSSECIKMLLEKLADSCIDPAMAESLKTLKQNSTEELPSQKLKNLSQAHDTEREGAGQDQHIVYNDQTTDNQENTTCLSEEAQQAEGSHSDHSVLMEEKILDPPLESASPCPSNTAGNNCPAQGPNSLDLEMHWKLIPIAEANLTEEQLVYVSTEDALPNDPRAGHKRRGSRYSPLHETERQRPRHDRDYCRSLTTPSRTERNMLQSKHCHNGLIENTVLEVYNTFSEQLHDVLKQRDVPYMVPAAPPLLSSDDRVLKLSDCLCEQVSDICVQQYVDDLHTTLDSVVAAHINSCAVSRTGSPVTEIMAATEVHTFHPKQTVTEYPHVHEHFHVNDLHSDVREANPFSADHVYKVGEENAANGHALSHNSRDLSQETPEISTSGVTDLSEPHLAISNLINQMNPEVFNNLVKIITHVNKNSVKFYVHTEEENAICQNIKEYLLKLGNTECRPEKFLESKTKADKLLIIIQNEDIPNCIHRVPALVLLKRLPSVSFAGVDSLDDLKNHTYNEIFVSGGFIVSDESVLNPETVTIDELKKFLMFLEEINSPDANWQWKIHYKFHKRLKELGRLNTNALNILTLLTTYQKKNLVEILSYHLSCDPQNQQAPQLECLIKLQVQYMKQRHVLFLTEKDAARFPDYCDNGIVVTRMVDFMDNFSNLIGHHSPNNEEQRLSQLTNQGDETAPGEADSKEEEDMSLDSEDDTPPIEVCTDSWKPESQKQNISSLLELVDKDQTESPSTLNQGKTPTLDELQPITPVSVAGSTTGENSVSTGDELGSNTKDYNREVNLSHQFSHFSLLTHQTFLGSMYPTLTNPSQAEICFMNSYSQLTEPETSKNSERKQK.

5 disordered regions span residues methionine 1 to alanine 74, glutamine 645 to threonine 711, glutamine 744 to glutamine 773, alanine 870 to serine 911, and asparagine 1390 to aspartate 1462. The span at valine 35–serine 47 shows a compositional bias: polar residues. The span at arginine 61 to aspartate 71 shows a compositional bias: basic residues. A compositionally biased stretch (basic and acidic residues) spans aspartate 667–glutamate 688. 2 stretches are compositionally biased toward polar residues: residues serine 692–glycine 702 and glutamine 744–alanine 761. The span at proline 888 to cysteine 904 shows a compositional bias: basic and acidic residues. The segment covering serine 1402–proline 1417 has biased composition (acidic residues). Polar residues predominate over residues glutamate 1448–threonine 1458.

Belongs to the TASOR family. Component of the HUSH complex.

It is found in the nucleus. Its subcellular location is the chromosome. Functionally, component of the HUSH complex, a multiprotein complex that mediates epigenetic repression. The HUSH complex is recruited to genomic loci rich in H3K9me3 and is probably required to maintain transcriptional silencing by promoting further deposition of H3K9me3. The polypeptide is Protein TASOR (Xenopus laevis (African clawed frog)).